Consider the following 351-residue polypeptide: Anthranilate phosphoribosyltransferase (351 aa).

5-phospho-alpha-D-ribose 1-diphosphate-binding positions include G80, 83 to 84, T88, 90 to 93, 108 to 116, and S120; these read GD, NIST, and KHGNRSVTS. Residue G80 coordinates anthranilate. S92 is a binding site for Mg(2+). N111 is a binding site for anthranilate. Position 166 (R166) interacts with anthranilate. Positions 229 and 230 each coordinate Mg(2+).

Belongs to the anthranilate phosphoribosyltransferase family. In terms of assembly, homodimer. Requires Mg(2+) as cofactor.

It catalyses the reaction N-(5-phospho-beta-D-ribosyl)anthranilate + diphosphate = 5-phospho-alpha-D-ribose 1-diphosphate + anthranilate. It functions in the pathway amino-acid biosynthesis; L-tryptophan biosynthesis; L-tryptophan from chorismate: step 2/5. Functionally, catalyzes the transfer of the phosphoribosyl group of 5-phosphorylribose-1-pyrophosphate (PRPP) to anthranilate to yield N-(5'-phosphoribosyl)-anthranilate (PRA). The protein is Anthranilate phosphoribosyltransferase of Pelodictyon phaeoclathratiforme (strain DSM 5477 / BU-1).